The following is a 917-amino-acid chain: Coiled-coil domain-containing protein 186 (917 aa).

3 disordered regions span residues methionine 1–glutamate 52, serine 97–aspartate 118, and threonine 701–valine 769. The segment covering threonine 33–serine 44 has biased composition (basic and acidic residues). The stretch at arginine 220–isoleucine 736 forms a coiled coil. Over residues arginine 722–isoleucine 736 the composition is skewed to basic and acidic residues. The span at serine 737–serine 748 shows a compositional bias: low complexity. Residue serine 759 is modified to Phosphoserine. Coiled-coil stretches lie at residues alanine 778–tyrosine 822 and lysine 874–arginine 913.

Expressed in postnatal germ cells.

This chain is Coiled-coil domain-containing protein 186 (Ccdc186), found in Mus musculus (Mouse).